Reading from the N-terminus, the 163-residue chain is MYISKQPFRKSKQPFRKSKQPFHKSKQPFRKFKQPFRKSKQPFRRRSRIGPGDRIDYRNMSLINRFISEQGKILSRRINRLTLKQQRLITLAIKQARILSFLPFRNYENEKQFQAQAISIITGPRHRKNRHIPQLTQKFNSNRNLRNSNQNLRNNNRNLSSDC.

2 disordered regions span residues 1-52 (MYIS…IGPG) and 144-163 (NLRN…SSDC). The segment covering 7 to 48 (PFRKSKQPFRKSKQPFHKSKQPFRKFKQPFRKSKQPFRRRSR) has biased composition (basic residues).

It belongs to the bacterial ribosomal protein bS18 family. Part of the 30S ribosomal subunit.

It is found in the plastid. It localises to the chloroplast. This Saccharum hybrid (Sugarcane) protein is Small ribosomal subunit protein bS18c.